The chain runs to 216 residues: NKG2-D type II integral membrane protein (216 aa).

Over 1–51 (MGWIRGRRSRHSWEMSEFHNYNLDLAKNDFSTRWQKQRCPVIKSKCRENTS) the chain is Cytoplasmic. A helical; Signal-anchor for type II membrane protein membrane pass occupies residues 52-72 (PLFFCCFIAVAMGIRFIVMVT). Over 73-216 (IWSAVFLNSL…NTYICMQRTV (144 aa)) the chain is Extracellular. Cystine bridges form between C96-C105 and C99-C110. A C-type lectin domain is found at 98–213 (PCPKNWICYK…STPNTYICMQ (116 aa)). Residues N115, N131, N163, and N202 are each glycosylated (N-linked (GlcNAc...) asparagine). Disulfide bonds link C127/C211 and C189/C203.

Homodimer; disulfide-linked. Heterohexamer composed of two subunits of KLRK1 and four subunits of HCST/DAP10. Interacts (via transmembrane domain) with HCST/DAP10 (via transmembrane domain); the interaction is required for KLRK1 NK cell surface and induces NK cell-mediated cytotoxicity. Can form disulfide-bonded heterodimer with CD94. Interacts with CEACAM1; recruits PTPN6 that dephosphorylates VAV1.

The protein resides in the cell membrane. Its function is as follows. Functions as an activating and costimulatory receptor involved in immunosurveillance upon binding to various cellular stress-inducible ligands displayed at the surface of autologous tumor cells and virus-infected cells. Provides both stimulatory and costimulatory innate immune responses on activated killer (NK) cells, leading to cytotoxic activity. Acts as a costimulatory receptor for T-cell receptor (TCR) in CD8(+) T-cell-mediated adaptive immune responses by amplifying T-cell activation. Stimulates perforin-mediated elimination of ligand-expressing tumor cells. Signaling involves calcium influx, culminating in the expression of TNF-alpha. Participates in NK cell-mediated bone marrow graft rejection. May play a regulatory role in differentiation and survival of NK cells. Binds to ligands belonging to various subfamilies of MHC class I-related glycoproteins. This chain is NKG2-D type II integral membrane protein (KLRK1), found in Pongo pygmaeus (Bornean orangutan).